The following is a 116-amino-acid chain: Spexin (116 aa).

A signal peptide spans 1–26 (MKGFKSLVVMTLTLFLVFSFMGNCNS). Positions 27 to 35 (APQRLFERR) are excised as a propeptide. Gln-49 is subject to Glutamine amide. 2 propeptides span residues 50–116 (GRRF…LLNW) and 74–116 (PNSQ…LLNW). Residues 53–73 (FLSDQSRRKDLSDRPPLERRS) are compositionally biased toward basic and acidic residues. The tract at residues 53–80 (FLSDQSRRKDLSDRPPLERRSPNSQQLT) is disordered.

This sequence belongs to the spexin family.

It localises to the secreted. The protein resides in the extracellular space. It is found in the cytoplasmic vesicle. Its subcellular location is the secretory vesicle. Plays a role as a central modulator of cardiovascular and renal function and nociception. Also plays a role in energy metabolism and storage. Inhibits adrenocortical cell proliferation with minor stimulation on corticosteroid release. Its function is as follows. Acts as a ligand for galanin receptors GALR2 and GALR3. Intracerebroventricular administration of the peptide induces an increase in arterial blood pressure, a decrease in both heart rate and renal excretion and delayed natriuresis. Intraventricular administration of the peptide induces antinociceptive activity. Also induces contraction of muscarinic-like stomach smooth muscles. Intraperitoneal administration of the peptide induces a reduction in food consumption and body weight. Inhibits long chain fatty acid uptake into adipocytes. Functionally, intracerebroventricular administration of the peptide induces a decrease in heart rate, but no change in arterial pressure, and an increase in urine flow rate. Intraventricular administration of the peptide induces antinociceptive activity. The sequence is that of Spexin (SPX) from Bos taurus (Bovine).